Reading from the N-terminus, the 402-residue chain is Mannonate dehydratase (402 aa).

The protein belongs to the mannonate dehydratase family. The cofactor is Fe(2+). Mn(2+) serves as cofactor.

It catalyses the reaction D-mannonate = 2-dehydro-3-deoxy-D-gluconate + H2O. It participates in carbohydrate metabolism; pentose and glucuronate interconversion. Its function is as follows. Catalyzes the dehydration of D-mannonate. This is Mannonate dehydratase from Rhizobium meliloti (strain 1021) (Ensifer meliloti).